We begin with the raw amino-acid sequence, 308 residues long: ADP-L-glycero-D-manno-heptose-6-epimerase (308 aa).

Residues 10 to 11 (FI), 31 to 32 (DN), Lys38, Lys53, 75 to 79 (EGACS), and Asn92 each bind NADP(+). Tyr139 functions as the Proton acceptor in the catalytic mechanism. Lys143 contributes to the NADP(+) binding site. Asn168 is a binding site for substrate. NADP(+) contacts are provided by Val169 and Lys177. The Proton acceptor role is filled by Lys177. Substrate contacts are provided by residues Ser179, His186, 200–203 (FAGS), Arg208, and Tyr271.

This sequence belongs to the NAD(P)-dependent epimerase/dehydratase family. HldD subfamily. In terms of assembly, homopentamer. NADP(+) is required as a cofactor.

The catalysed reaction is ADP-D-glycero-beta-D-manno-heptose = ADP-L-glycero-beta-D-manno-heptose. It participates in nucleotide-sugar biosynthesis; ADP-L-glycero-beta-D-manno-heptose biosynthesis; ADP-L-glycero-beta-D-manno-heptose from D-glycero-beta-D-manno-heptose 7-phosphate: step 4/4. Functionally, catalyzes the interconversion between ADP-D-glycero-beta-D-manno-heptose and ADP-L-glycero-beta-D-manno-heptose via an epimerization at carbon 6 of the heptose. The protein is ADP-L-glycero-D-manno-heptose-6-epimerase of Actinobacillus succinogenes (strain ATCC 55618 / DSM 22257 / CCUG 43843 / 130Z).